The following is a 191-amino-acid chain: MRGVVGVLALQGDFREHKEALKRLGIEAKEVRKVKDLEGLKALIVPGGESTTIGKLAREYGLEEAVRRRVEEGTLALFGTCAGAIWLAREILGYPEQPRLGVLDAAVERNAFGRQVESFEEDLEVEGLGPFHGVFIRAPVFRRLGEGVEVLARLGDLPVLVRQGKVLASSFHPELTEDPRLHRYFLELAGV.

Residue 48–50 coordinates L-glutamine; that stretch reads GES. Cys-81 serves as the catalytic Nucleophile. L-glutamine contacts are provided by residues Arg-109 and 136-137; that span reads IR. Active-site charge relay system residues include His-172 and Glu-174.

This sequence belongs to the glutaminase PdxT/SNO family. In terms of assembly, in the presence of PdxS, forms a dodecamer of heterodimers. Only shows activity in the heterodimer.

It carries out the reaction aldehydo-D-ribose 5-phosphate + D-glyceraldehyde 3-phosphate + L-glutamine = pyridoxal 5'-phosphate + L-glutamate + phosphate + 3 H2O + H(+). The catalysed reaction is L-glutamine + H2O = L-glutamate + NH4(+). It participates in cofactor biosynthesis; pyridoxal 5'-phosphate biosynthesis. Its function is as follows. Catalyzes the hydrolysis of glutamine to glutamate and ammonia as part of the biosynthesis of pyridoxal 5'-phosphate. The resulting ammonia molecule is channeled to the active site of PdxS. The protein is Pyridoxal 5'-phosphate synthase subunit PdxT of Thermus thermophilus (strain ATCC BAA-163 / DSM 7039 / HB27).